Consider the following 742-residue polypeptide: Phosphoribosylformylglycinamidine synthase subunit PurL (742 aa).

H54 is a catalytic residue. The ATP site is built by Y57 and K96. Residue E98 coordinates Mg(2+). Substrate contacts are provided by residues 99-102 and R121; that span reads SHNH. The active-site Proton acceptor is the H100. D122 serves as a coordination point for Mg(2+). G225 and Q245 together coordinate substrate. A Mg(2+)-binding site is contributed by D273. Substrate is bound at residue 317–319; that stretch reads ESQ. G537 contributes to the ATP binding site. Mg(2+) is bound at residue N538. S540 lines the substrate pocket.

Belongs to the FGAMS family. In terms of assembly, monomer. Part of the FGAM synthase complex composed of 1 PurL, 1 PurQ and 2 PurS subunits.

It is found in the cytoplasm. It carries out the reaction N(2)-formyl-N(1)-(5-phospho-beta-D-ribosyl)glycinamide + L-glutamine + ATP + H2O = 2-formamido-N(1)-(5-O-phospho-beta-D-ribosyl)acetamidine + L-glutamate + ADP + phosphate + H(+). It catalyses the reaction L-glutamine + H2O = L-glutamate + NH4(+). Its pathway is purine metabolism; IMP biosynthesis via de novo pathway; 5-amino-1-(5-phospho-D-ribosyl)imidazole from N(2)-formyl-N(1)-(5-phospho-D-ribosyl)glycinamide: step 1/2. Its function is as follows. Part of the phosphoribosylformylglycinamidine synthase complex involved in the purines biosynthetic pathway. Catalyzes the ATP-dependent conversion of formylglycinamide ribonucleotide (FGAR) and glutamine to yield formylglycinamidine ribonucleotide (FGAM) and glutamate. The FGAM synthase complex is composed of three subunits. PurQ produces an ammonia molecule by converting glutamine to glutamate. PurL transfers the ammonia molecule to FGAR to form FGAM in an ATP-dependent manner. PurS interacts with PurQ and PurL and is thought to assist in the transfer of the ammonia molecule from PurQ to PurL. The polypeptide is Phosphoribosylformylglycinamidine synthase subunit PurL (Bacillus subtilis (strain 168)).